We begin with the raw amino-acid sequence, 417 residues long: Serine hydroxymethyltransferase (417 aa).

Residues leucine 121 and 125 to 127 (GHL) contribute to the (6S)-5,6,7,8-tetrahydrofolate site. At lysine 229 the chain carries N6-(pyridoxal phosphate)lysine. Residue 355 to 357 (SPF) participates in (6S)-5,6,7,8-tetrahydrofolate binding.

This sequence belongs to the SHMT family. As to quaternary structure, homodimer. Pyridoxal 5'-phosphate serves as cofactor.

The protein resides in the cytoplasm. The catalysed reaction is (6R)-5,10-methylene-5,6,7,8-tetrahydrofolate + glycine + H2O = (6S)-5,6,7,8-tetrahydrofolate + L-serine. It participates in one-carbon metabolism; tetrahydrofolate interconversion. Its pathway is amino-acid biosynthesis; glycine biosynthesis; glycine from L-serine: step 1/1. Its function is as follows. Catalyzes the reversible interconversion of serine and glycine with tetrahydrofolate (THF) serving as the one-carbon carrier. This reaction serves as the major source of one-carbon groups required for the biosynthesis of purines, thymidylate, methionine, and other important biomolecules. Also exhibits THF-independent aldolase activity toward beta-hydroxyamino acids, producing glycine and aldehydes, via a retro-aldol mechanism. This chain is Serine hydroxymethyltransferase, found in Erwinia tasmaniensis (strain DSM 17950 / CFBP 7177 / CIP 109463 / NCPPB 4357 / Et1/99).